The chain runs to 697 residues: Elongation factor G 2 (697 aa).

Positions 5–280 (SKYRNIGIFA…AVVDYLPDPV (276 aa)) constitute a tr-type G domain. GTP contacts are provided by residues 14-21 (AHVDAGKT), 78-82 (DTPGH), and 132-135 (NKLD).

This sequence belongs to the TRAFAC class translation factor GTPase superfamily. Classic translation factor GTPase family. EF-G/EF-2 subfamily.

The protein localises to the cytoplasm. Its function is as follows. Catalyzes the GTP-dependent ribosomal translocation step during translation elongation. During this step, the ribosome changes from the pre-translocational (PRE) to the post-translocational (POST) state as the newly formed A-site-bound peptidyl-tRNA and P-site-bound deacylated tRNA move to the P and E sites, respectively. Catalyzes the coordinated movement of the two tRNA molecules, the mRNA and conformational changes in the ribosome. The protein is Elongation factor G 2 of Shewanella frigidimarina (strain NCIMB 400).